The following is a 162-amino-acid chain: Peroxiredoxin-2C (162 aa).

In terms of domain architecture, Thioredoxin spans Val4–Leu162. Cys51 acts as the Cysteine sulfenic acid (-SOH) intermediate in catalysis.

It belongs to the peroxiredoxin family. Prx5 subfamily. As to quaternary structure, monomer.

Its subcellular location is the cytoplasm. It catalyses the reaction [glutaredoxin]-dithiol + a hydroperoxide = [glutaredoxin]-disulfide + an alcohol + H2O. Functionally, reduces hydrogen peroxide and alkyl hydroperoxides with reducing equivalents provided through the thioredoxin or glutaredoxin system. May be involved in intracellular redox signaling. In terms of biological role, thiol-specific peroxidase that catalyzes the reduction of hydrogen peroxide and organic hydroperoxides to water and alcohols, respectively. Plays a role in cell protection against oxidative stress by detoxifying peroxides. The sequence is that of Peroxiredoxin-2C (PRXIIC) from Oryza sativa subsp. japonica (Rice).